The chain runs to 203 residues: Endo-type membrane-bound lytic murein transglycosylase A (203 aa).

Residues 1–15 form the signal peptide; that stretch reads MKLRWFAFLMVLLAG. Cys-16 carries N-palmitoyl cysteine lipidation. Cys-16 carries S-diacylglycerol cysteine lipidation.

This sequence belongs to the transglycosylase Slt family.

The protein localises to the cell outer membrane. The catalysed reaction is Endolytic cleavage of the (1-&gt;4)-beta-glycosidic linkage between N-acetylmuramic acid (MurNAc) and N-acetylglucosamine (GlcNAc) residues in peptidoglycan with concomitant formation of a 1,6-anhydrobond in the MurNAc residue.. In terms of biological role, murein-degrading enzyme. May play a role in recycling of muropeptides during cell elongation and/or cell division. Preferentially cleaves at a distance of more than two disaccharide units from the ends of the glycan chain. The polypeptide is Endo-type membrane-bound lytic murein transglycosylase A (Enterobacter sp. (strain 638)).